Here is a 35-residue protein sequence, read N- to C-terminus: MSDIN-like toxin proprotein 8 (35 aa).

A propeptide spanning residues 1 to 10 is cleaved from the precursor; the sequence is MSDINATRLP. Residues 11 to 18 constitute a cross-link (cyclopeptide (Phe-Pro)); sequence FVFVASPP. Positions 19-35 are excised as a propeptide; the sequence is CVGDDIAMVLTRGENLC.

Belongs to the MSDIN fungal toxin family. In terms of processing, processed by the macrocyclase-peptidase enzyme POPB to yield a toxic cyclic octapeptide. POPB first removes 10 residues from the N-terminus. Conformational trapping of the remaining peptide forces the enzyme to release this intermediate rather than proceed to macrocyclization. The enzyme rebinds the remaining peptide in a different conformation and catalyzes macrocyclization of the N-terminal 8 residues. Expressed in basidiocarps.

Its function is as follows. Probable toxin that belongs to the MSDIN-like toxin family responsible for a large number of food poisoning cases and deaths. In Amanita exitialis (Guangzhou destroying angel), this protein is MSDIN-like toxin proprotein 8.